A 140-amino-acid chain; its full sequence is Histone H2B (140 aa).

Residues 1 to 10 show a composition bias toward basic and acidic residues; that stretch reads MPPKAAEKKP. The disordered stretch occupies residues 1-48; the sequence is MPPKAAEKKPSTGGKAPAGKAPAEKKEAGKKTAAAASGEKKKRGKTRK. An N6-acetyllysine; alternate mark is found at Lys-8 and Lys-9. Glycyl lysine isopeptide (Lys-Gly) (interchain with G-Cter in SUMO); alternate cross-links involve residues Lys-8 and Lys-9. Residues 11–21 are compositionally biased toward low complexity; sequence STGGKAPAGKA. Position 15 is an N6-acetyllysine (Lys-15). Position 25 is an N6-acetyllysine; alternate (Lys-25). Lys-25 is covalently cross-linked (Glycyl lysine isopeptide (Lys-Gly) (interchain with G-Cter in SUMO); alternate). Residue Lys-26 forms a Glycyl lysine isopeptide (Lys-Gly) (interchain with G-Cter in SUMO) linkage. Lys-134 is covalently cross-linked (Glycyl lysine isopeptide (Lys-Gly) (interchain with G-Cter in ubiquitin)).

The protein belongs to the histone H2B family. In terms of assembly, the nucleosome is a histone octamer containing two molecules each of H2A, H2B, H3 and H4 assembled in one H3-H4 heterotetramer and two H2A-H2B heterodimers. The octamer wraps approximately 147 bp of DNA. Monoubiquitinated by the ubc2-bre1 complex to form H2BK123ub1. H2BK123ub1 gives a specific tag for epigenetic transcriptional activation and is also prerequisite for H3K4me and H3K79me formation. H2BK123ub1 also modulates the formation of double-strand breaks during meiosis and is a prerequisite for DNA-damage checkpoint activation. Post-translationally, acetylated by gcn5 to form H2BK11ac and H2BK16ac. H2BK16ac can also be formed by esa1. Acetylation of N-terminal lysines and particularly formation of H2BK11acK16ac has a positive effect on transcription. In terms of processing, sumoylation to form H2BK6su or H2BK7su, and probably also H2BK16su or H2BK17su, occurs preferentially near the telomeres and represses gene transcription.

The protein localises to the nucleus. It localises to the chromosome. Functionally, core component of nucleosome. Nucleosomes wrap and compact DNA into chromatin, limiting DNA accessibility to the cellular machineries which require DNA as a template. Histones thereby play a central role in transcription regulation, DNA repair, DNA replication and chromosomal stability. DNA accessibility is regulated via a complex set of post-translational modifications of histones, also called histone code, and nucleosome remodeling. This Emericella nidulans (strain FGSC A4 / ATCC 38163 / CBS 112.46 / NRRL 194 / M139) (Aspergillus nidulans) protein is Histone H2B (htbA).